Here is a 387-residue protein sequence, read N- to C-terminus: Formate-dependent phosphoribosylglycinamide formyltransferase (387 aa).

Residues 21-22 (EL) and Glu81 contribute to the N(1)-(5-phospho-beta-D-ribosyl)glycinamide site. ATP contacts are provided by residues Arg113, Lys154, 159–164 (SSGHGQ), 193–196 (EEFV), and Glu201. Positions 118–306 (VFAAETLDLK…EFALHVRAVL (189 aa)) constitute an ATP-grasp domain. 2 residues coordinate Mg(2+): Glu265 and Glu277. N(1)-(5-phospho-beta-D-ribosyl)glycinamide contacts are provided by residues Asp284, Lys352, and 359–360 (RR).

This sequence belongs to the PurK/PurT family. As to quaternary structure, homodimer.

The enzyme catalyses N(1)-(5-phospho-beta-D-ribosyl)glycinamide + formate + ATP = N(2)-formyl-N(1)-(5-phospho-beta-D-ribosyl)glycinamide + ADP + phosphate + H(+). Its pathway is purine metabolism; IMP biosynthesis via de novo pathway; N(2)-formyl-N(1)-(5-phospho-D-ribosyl)glycinamide from N(1)-(5-phospho-D-ribosyl)glycinamide (formate route): step 1/1. Its function is as follows. Involved in the de novo purine biosynthesis. Catalyzes the transfer of formate to 5-phospho-ribosyl-glycinamide (GAR), producing 5-phospho-ribosyl-N-formylglycinamide (FGAR). Formate is provided by PurU via hydrolysis of 10-formyl-tetrahydrofolate. In Sulfurovum sp. (strain NBC37-1), this protein is Formate-dependent phosphoribosylglycinamide formyltransferase.